The primary structure comprises 86 residues: Small ribosomal subunit protein uS15 (86 aa).

Belongs to the universal ribosomal protein uS15 family. In terms of assembly, part of the 30S ribosomal subunit. Forms a bridge to the 50S subunit in the 70S ribosome, contacting the 23S rRNA.

Its function is as follows. One of the primary rRNA binding proteins, it binds directly to 16S rRNA where it helps nucleate assembly of the platform of the 30S subunit by binding and bridging several RNA helices of the 16S rRNA. In terms of biological role, forms an intersubunit bridge (bridge B4) with the 23S rRNA of the 50S subunit in the ribosome. The sequence is that of Small ribosomal subunit protein uS15 from Vesicomyosocius okutanii subsp. Calyptogena okutanii (strain HA).